The chain runs to 210 residues: ATP phosphoribosyltransferase (210 aa).

This sequence belongs to the ATP phosphoribosyltransferase family. Short subfamily. As to quaternary structure, heteromultimer composed of HisG and HisZ subunits.

It localises to the cytoplasm. The enzyme catalyses 1-(5-phospho-beta-D-ribosyl)-ATP + diphosphate = 5-phospho-alpha-D-ribose 1-diphosphate + ATP. Its pathway is amino-acid biosynthesis; L-histidine biosynthesis; L-histidine from 5-phospho-alpha-D-ribose 1-diphosphate: step 1/9. Its function is as follows. Catalyzes the condensation of ATP and 5-phosphoribose 1-diphosphate to form N'-(5'-phosphoribosyl)-ATP (PR-ATP). Has a crucial role in the pathway because the rate of histidine biosynthesis seems to be controlled primarily by regulation of HisG enzymatic activity. In Picosynechococcus sp. (strain ATCC 27264 / PCC 7002 / PR-6) (Agmenellum quadruplicatum), this protein is ATP phosphoribosyltransferase.